The sequence spans 904 residues: Mdm2-binding protein (904 aa).

The tract at residues 19–38 is disordered; sequence ASREAEHGPEVSSGEGTENQ. The interaction with MDM2 stretch occupies residues 521–904; it reads MILRKMDKIK…DWVLEKTSKK (384 aa). Phosphoserine is present on residues S597, S639, S703, and S707. 2 disordered regions span residues 754–784 and 800–830; these read ESSE…TERS and PKLA…SQKH. Residues 812–830 show a composition bias toward basic and acidic residues; the sequence is SMHESKTSRQIKESRSQKH.

Belongs to the MTBP family. As to quaternary structure, interacts with MDM2.

Its function is as follows. Inhibits cell migration in vitro and suppresses the invasive behavior of tumor cells. May play a role in MDM2-dependent p53/TP53 homeostasis in unstressed cells. Inhibits autoubiquitination of MDM2, thereby enhancing MDM2 stability. This promotes MDM2-mediated ubiquitination of p53/TP53 and its subsequent degradation. The protein is Mdm2-binding protein (MTBP) of Homo sapiens (Human).